The primary structure comprises 156 residues: ATP synthase subunit b (156 aa).

A helical membrane pass occupies residues 5–27 (ITLIGQMITFAIFIGFTMKFVWP).

This sequence belongs to the ATPase B chain family. In terms of assembly, F-type ATPases have 2 components, F(1) - the catalytic core - and F(0) - the membrane proton channel. F(1) has five subunits: alpha(3), beta(3), gamma(1), delta(1), epsilon(1). F(0) has three main subunits: a(1), b(2) and c(10-14). The alpha and beta chains form an alternating ring which encloses part of the gamma chain. F(1) is attached to F(0) by a central stalk formed by the gamma and epsilon chains, while a peripheral stalk is formed by the delta and b chains.

It localises to the cell inner membrane. Functionally, f(1)F(0) ATP synthase produces ATP from ADP in the presence of a proton or sodium gradient. F-type ATPases consist of two structural domains, F(1) containing the extramembraneous catalytic core and F(0) containing the membrane proton channel, linked together by a central stalk and a peripheral stalk. During catalysis, ATP synthesis in the catalytic domain of F(1) is coupled via a rotary mechanism of the central stalk subunits to proton translocation. Component of the F(0) channel, it forms part of the peripheral stalk, linking F(1) to F(0). The chain is ATP synthase subunit b from Francisella tularensis subsp. holarctica (strain OSU18).